Consider the following 319-residue polypeptide: G-protein coupled receptor 171 (319 aa).

At 1–21 (MTNSSFFCPVYKDLEPFTYFF) the chain is on the extracellular side. N-linked (GlcNAc...) asparagine glycosylation occurs at Asn3. The chain crosses the membrane as a helical span at residues 22–42 (YLVFLVGIIGSCFATWAFIQK). At 43–48 (NTNHRC) the chain is on the cytoplasmic side. The chain crosses the membrane as a helical span at residues 49 to 69 (VSIYLINLLTADFLLTLALPV). Residues 70–89 (KIVVDLGVAPWKLKIFHCQV) are Extracellular-facing. A helical transmembrane segment spans residues 90–110 (TACLIYINMYLSIIFLAFVSI). At 111–132 (DRCLQLTHSCKIYRIQEPGFAK) the chain is on the cytoplasmic side. A helical transmembrane segment spans residues 133–153 (MISTVVWLMVLLIMVPNMMIP). The Extracellular segment spans residues 154–181 (IKDIKEKSNVGCMEFKKEFGRNWHLLTN). The chain crosses the membrane as a helical span at residues 182–202 (FICVAIFLNFSAIILISNCLV). The Cytoplasmic portion of the chain corresponds to 203–224 (IRQLYRNKDNENYPNVKKALIN). Residues 225-245 (ILLVTTGYIICFVPYHIVRIP) form a helical membrane-spanning segment. Over 246–268 (YTLSQTEVITDCSTRISLFKAKE) the chain is Extracellular. The helical transmembrane segment at 269–289 (ATLLLAVSNLCFDPILYYHLS) threads the bilayer. Residues 290–319 (KAFRSKVTETFASPKETKAQKEKLRCENNA) are Cytoplasmic-facing.

This sequence belongs to the G-protein coupled receptor 1 family. Expressed in both T-cell subsets and natural killer cells, while it is undetectable in B cells or CD14(+) monocytes. Expressed in peripheral blood mononuclear cells (PBMC) and Jurkat cells (at protein level).

It is found in the cell membrane. G-protein coupled receptor for Big LEN, a 16-amino acid neuropeptide produced from the precursor protein, proSAAS (encoded by PCSK1N). Acts through a G(i)-alpha-mediated pathway in response to Big LEN. Big LEN-GPR171 system plays an important role in regulating feeding and metabolism. Also plays a role in modulating fear and anxiety-like behaviors in the basolateral amygdala. Big LEN-GPR171 modulates the mu-type opioid receptor signaling and antinociception. Acts as a negative regulator T cell function. This chain is G-protein coupled receptor 171, found in Homo sapiens (Human).